The following is a 364-amino-acid chain: uncharacterized protein (364 aa).

Residues 1–17 show a composition bias toward acidic residues; the sequence is MEPGELMEVDTSQELDE. The segment at 1–61 is disordered; it reads MEPGELMEVD…EEDQSSTETM (61 aa). A compositionally biased stretch (basic and acidic residues) spans 19-31; it reads TSAKETDQPKDAQ.

This is an uncharacterized protein from Caenorhabditis elegans.